Consider the following 376-residue polypeptide: Heat stress transcription factor A-2a (376 aa).

The interval 137-168 (LKTIKRRRPPPSSPPSSSSSSSSSQHQQQPAA) is disordered. Over residues 151 to 160 (PSSSSSSSSS) the composition is skewed to low complexity. Residues 182-229 (VNRLQRDKSVLIAEVVKLRQEQQTTRAQMQAMEERISAAEQKQQQMTV) adopt a coiled-coil conformation. The segment at 185–235 (LQRDKSVLIAEVVKLRQEQQTTRAQMQAMEERISAAEQKQQQMTVFLARAM) is hydrophobic repeat HR-A/B. The Nuclear localization signal signature appears at 265 to 269 (KKRRR). Disordered regions lie at residues 296–319 (VAEPDGDTTPRGDGGGGGGGDTES) and 332–362 (KQREDGVAGGVQESNSGGADVDNDEEDDDDD). A compositionally biased stretch (gly residues) spans 307-316 (GDGGGGGGGD). Positions 318 to 325 (ESFWMQLL) match the AHA motif. Positions 352 to 362 (VDNDEEDDDDD) are enriched in acidic residues. Residues 366 to 373 (LVQSIYHL) carry the Nuclear export signal motif.

It belongs to the HSF family. Class A subfamily. In terms of assembly, homotrimer. In terms of processing, exhibits temperature-dependent phosphorylation.

It is found in the cytoplasm. The protein resides in the nucleus. In terms of biological role, transcriptional regulator that specifically binds DNA of heat shock promoter elements (HSE). The polypeptide is Heat stress transcription factor A-2a (HSFA2A) (Oryza sativa subsp. japonica (Rice)).